A 198-amino-acid chain; its full sequence is Prostamide/prostaglandin F synthase (198 aa).

Residue Tyr108 is modified to Phosphotyrosine.

It belongs to the peroxiredoxin-like PRXL2 family. Prostamide/prostaglandin F synthase subfamily.

Its subcellular location is the cytoplasm. It localises to the cytosol. The enzyme catalyses prostaglandin H2 + [thioredoxin]-dithiol = prostaglandin F2alpha + [thioredoxin]-disulfide. It catalyses the reaction prostamide F2alpha + [thioredoxin]-disulfide = prostamide H2 + [thioredoxin]-dithiol. In terms of biological role, catalyzes the reduction of prostaglandin-ethanolamide H(2) (prostamide H(2)) to prostamide F(2alpha) with NADPH as proton donor. Also able to reduce prostaglandin H(2) to prostaglandin F(2alpha). This is Prostamide/prostaglandin F synthase from Homo sapiens (Human).